The chain runs to 389 residues: Phospho-N-acetylmuramoyl-pentapeptide-transferase (389 aa).

The next 10 membrane-spanning stretches (helical) occupy residues 25–45 (RAVM…PWVI), 74–94 (MGGV…CDWG), 97–117 (FIWV…VDDY), 134–154 (FFWQ…SVSE), 190–210 (ISYP…IVGS), 222–242 (GLVI…AYVM), 259–279 (AGEL…FLWF), 286–306 (VFMG…VAVI), 311–331 (IVLF…MAQV), and 366–386 (QVTV…LSTL).

It belongs to the glycosyltransferase 4 family. MraY subfamily. It depends on Mg(2+) as a cofactor.

It is found in the cell inner membrane. It carries out the reaction UDP-N-acetyl-alpha-D-muramoyl-L-alanyl-gamma-D-glutamyl-meso-2,6-diaminopimeloyl-D-alanyl-D-alanine + di-trans,octa-cis-undecaprenyl phosphate = di-trans,octa-cis-undecaprenyl diphospho-N-acetyl-alpha-D-muramoyl-L-alanyl-D-glutamyl-meso-2,6-diaminopimeloyl-D-alanyl-D-alanine + UMP. It functions in the pathway cell wall biogenesis; peptidoglycan biosynthesis. In terms of biological role, catalyzes the initial step of the lipid cycle reactions in the biosynthesis of the cell wall peptidoglycan: transfers peptidoglycan precursor phospho-MurNAc-pentapeptide from UDP-MurNAc-pentapeptide onto the lipid carrier undecaprenyl phosphate, yielding undecaprenyl-pyrophosphoryl-MurNAc-pentapeptide, known as lipid I. The protein is Phospho-N-acetylmuramoyl-pentapeptide-transferase of Cupriavidus necator (strain ATCC 17699 / DSM 428 / KCTC 22496 / NCIMB 10442 / H16 / Stanier 337) (Ralstonia eutropha).